The following is a 230-amino-acid chain: uncharacterized protein (230 aa).

NADP(+) is bound at residue 10-34; that stretch reads VVTGASSGIGEAIAKKLSQQGASIV. S139 contacts substrate. Y152 acts as the Proton acceptor in catalysis.

It belongs to the short-chain dehydrogenases/reductases (SDR) family.

This is an uncharacterized protein from Staphylococcus epidermidis (strain ATCC 12228 / FDA PCI 1200).